A 397-amino-acid polypeptide reads, in one-letter code: Succinyl-diaminopimelate desuccinylase (397 aa).

His-73 serves as a coordination point for Zn(2+). Asp-75 is a catalytic residue. Asp-106 provides a ligand contact to Zn(2+). The active-site Proton acceptor is Glu-140. Residues Glu-141, Glu-169, and His-366 each contribute to the Zn(2+) site.

The protein belongs to the peptidase M20A family. DapE subfamily. In terms of assembly, homodimer. Zn(2+) is required as a cofactor. The cofactor is Co(2+).

It carries out the reaction N-succinyl-(2S,6S)-2,6-diaminopimelate + H2O = (2S,6S)-2,6-diaminopimelate + succinate. It participates in amino-acid biosynthesis; L-lysine biosynthesis via DAP pathway; LL-2,6-diaminopimelate from (S)-tetrahydrodipicolinate (succinylase route): step 3/3. Functionally, catalyzes the hydrolysis of N-succinyl-L,L-diaminopimelic acid (SDAP), forming succinate and LL-2,6-diaminopimelate (DAP), an intermediate involved in the bacterial biosynthesis of lysine and meso-diaminopimelic acid, an essential component of bacterial cell walls. The sequence is that of Succinyl-diaminopimelate desuccinylase from Rhizobium rhizogenes (strain K84 / ATCC BAA-868) (Agrobacterium radiobacter).